The chain runs to 325 residues: Holliday junction branch migration complex subunit RuvB (325 aa).

The interval Met-1–Tyr-172 is large ATPase domain (RuvB-L). ATP is bound by residues Leu-11, Arg-12, Gly-53, Lys-56, Thr-57, Thr-58, Glu-119–Phe-121, Arg-162, Tyr-172, and Arg-209. Mg(2+) is bound at residue Thr-57. A small ATPAse domain (RuvB-S) region spans residues Asn-173 to Asp-243. The segment at Asp-246–Phe-325 is head domain (RuvB-H). Positions 301 and 306 each coordinate DNA.

The protein belongs to the RuvB family. As to quaternary structure, homohexamer. Forms an RuvA(8)-RuvB(12)-Holliday junction (HJ) complex. HJ DNA is sandwiched between 2 RuvA tetramers; dsDNA enters through RuvA and exits via RuvB. An RuvB hexamer assembles on each DNA strand where it exits the tetramer. Each RuvB hexamer is contacted by two RuvA subunits (via domain III) on 2 adjacent RuvB subunits; this complex drives branch migration. In the full resolvosome a probable DNA-RuvA(4)-RuvB(12)-RuvC(2) complex forms which resolves the HJ.

It is found in the cytoplasm. The enzyme catalyses ATP + H2O = ADP + phosphate + H(+). In terms of biological role, the RuvA-RuvB-RuvC complex processes Holliday junction (HJ) DNA during genetic recombination and DNA repair, while the RuvA-RuvB complex plays an important role in the rescue of blocked DNA replication forks via replication fork reversal (RFR). RuvA specifically binds to HJ cruciform DNA, conferring on it an open structure. The RuvB hexamer acts as an ATP-dependent pump, pulling dsDNA into and through the RuvAB complex. RuvB forms 2 homohexamers on either side of HJ DNA bound by 1 or 2 RuvA tetramers; 4 subunits per hexamer contact DNA at a time. Coordinated motions by a converter formed by DNA-disengaged RuvB subunits stimulates ATP hydrolysis and nucleotide exchange. Immobilization of the converter enables RuvB to convert the ATP-contained energy into a lever motion, pulling 2 nucleotides of DNA out of the RuvA tetramer per ATP hydrolyzed, thus driving DNA branch migration. The RuvB motors rotate together with the DNA substrate, which together with the progressing nucleotide cycle form the mechanistic basis for DNA recombination by continuous HJ branch migration. Branch migration allows RuvC to scan DNA until it finds its consensus sequence, where it cleaves and resolves cruciform DNA. This Thermodesulfovibrio yellowstonii (strain ATCC 51303 / DSM 11347 / YP87) protein is Holliday junction branch migration complex subunit RuvB.